We begin with the raw amino-acid sequence, 363 residues long: 3-isopropylmalate dehydrogenase (363 aa).

77–90 (GPKWQHLPPDQQPE) provides a ligand contact to NAD(+). Substrate contacts are provided by Arg98, Arg108, Arg137, and Asp226. Mg(2+)-binding residues include Asp226, Asp250, and Asp254. An NAD(+)-binding site is contributed by 284-296 (GSAPDIAGKNIAN).

Belongs to the isocitrate and isopropylmalate dehydrogenases family. LeuB type 1 subfamily. As to quaternary structure, homodimer. Mg(2+) serves as cofactor. It depends on Mn(2+) as a cofactor.

Its subcellular location is the cytoplasm. It carries out the reaction (2R,3S)-3-isopropylmalate + NAD(+) = 4-methyl-2-oxopentanoate + CO2 + NADH. It participates in amino-acid biosynthesis; L-leucine biosynthesis; L-leucine from 3-methyl-2-oxobutanoate: step 3/4. Catalyzes the oxidation of 3-carboxy-2-hydroxy-4-methylpentanoate (3-isopropylmalate) to 3-carboxy-4-methyl-2-oxopentanoate. The product decarboxylates to 4-methyl-2 oxopentanoate. The protein is 3-isopropylmalate dehydrogenase of Buchnera aphidicola subsp. Pemphigus spyrothecae.